Consider the following 426-residue polypeptide: MTTETLTVRDLGLRARAAARVLRSLPTARKAAALHAIARELQAREGVILAANARDVAAAEAARLPAHMVARLRLDAASLAAIADDVAAVAQLPDPVGETTPERILPSGIRVSQRRVPLGVLGVIYESRPNVTVDVAALALMSGNAVILRGGKETVNSNAALEGAIRAALASENIPEDAVQVIRDPARERMLELLRLDDLVDAIIPRGGAGLHRFCVENATVPVIVGGIGVVHIYLDESFTRDPADVARAVNLIRNAKVQKPSACNALDTLLIHVRALPVLPAIARDLTAHGVTLRADPPALAALQTAGLEAQAATDADYGTEFLALTASIRTVSGLEEALDFIAAHGNHTDVILTRDPTQAERFVQDVDSAAVMVNASPRFNDGGQLGLGAEVAISTQKLHARGPMGLRELTTTKWVVVGDGQVRE.

Belongs to the gamma-glutamyl phosphate reductase family.

It is found in the cytoplasm. It catalyses the reaction L-glutamate 5-semialdehyde + phosphate + NADP(+) = L-glutamyl 5-phosphate + NADPH + H(+). Its pathway is amino-acid biosynthesis; L-proline biosynthesis; L-glutamate 5-semialdehyde from L-glutamate: step 2/2. Catalyzes the NADPH-dependent reduction of L-glutamate 5-phosphate into L-glutamate 5-semialdehyde and phosphate. The product spontaneously undergoes cyclization to form 1-pyrroline-5-carboxylate. This Deinococcus geothermalis (strain DSM 11300 / CIP 105573 / AG-3a) protein is Gamma-glutamyl phosphate reductase.